Here is a 222-residue protein sequence, read N- to C-terminus: 3,4-dihydroxy-2-butanone 4-phosphate synthase (222 aa).

D-ribulose 5-phosphate-binding positions include 37 to 38 (RE), D42, 150 to 154 (RPGHT), and E174. E38 is a Mg(2+) binding site. H153 is a Mg(2+) binding site.

This sequence belongs to the DHBP synthase family. Homodimer. Requires Mg(2+) as cofactor. The cofactor is Mn(2+).

It carries out the reaction D-ribulose 5-phosphate = (2S)-2-hydroxy-3-oxobutyl phosphate + formate + H(+). It participates in cofactor biosynthesis; riboflavin biosynthesis; 2-hydroxy-3-oxobutyl phosphate from D-ribulose 5-phosphate: step 1/1. Functionally, catalyzes the conversion of D-ribulose 5-phosphate to formate and 3,4-dihydroxy-2-butanone 4-phosphate. The chain is 3,4-dihydroxy-2-butanone 4-phosphate synthase from Chlorobium limicola (strain DSM 245 / NBRC 103803 / 6330).